A 172-amino-acid polypeptide reads, in one-letter code: Translation initiation factor IF-3 (172 aa).

The protein belongs to the IF-3 family. Monomer.

The protein localises to the cytoplasm. Functionally, IF-3 binds to the 30S ribosomal subunit and shifts the equilibrium between 70S ribosomes and their 50S and 30S subunits in favor of the free subunits, thus enhancing the availability of 30S subunits on which protein synthesis initiation begins. The polypeptide is Translation initiation factor IF-3 (Thermotoga maritima (strain ATCC 43589 / DSM 3109 / JCM 10099 / NBRC 100826 / MSB8)).